The primary structure comprises 345 residues: NADPH dehydrogenase (345 aa).

Serine 23–cysteine 26 provides a ligand contact to FMN. Tyrosine 28 is a binding site for substrate. Positions 60 and 102 each coordinate FMN. Position 164–167 (histidine 164–histidine 167) interacts with substrate. FMN is bound by residues arginine 215 and glycine 307–arginine 308.

It belongs to the NADH:flavin oxidoreductase/NADH oxidase family. NamA subfamily. Homotetramer. FMN is required as a cofactor.

It catalyses the reaction A + NADPH + H(+) = AH2 + NADP(+). Functionally, catalyzes the reduction of the double bond of an array of alpha,beta-unsaturated aldehydes and ketones. It also reduces the nitro group of nitroester and nitroaromatic compounds. It could have a role in detoxification processes. This chain is NADPH dehydrogenase, found in Bacillus cereus (strain ZK / E33L).